The following is a 428-amino-acid chain: GTPase Obg (428 aa).

The 158-residue stretch at 1 to 158 (MFVDQVKIYV…RDVILELKVL (158 aa)) folds into the Obg domain. One can recognise an OBG-type G domain in the interval 159–329 (ADVGLVGFPS…LLFEVANLLE (171 aa)). GTP contacts are provided by residues 165–172 (GFPSVGKS), 190–194 (FTTIV), 212–215 (DLPG), 282–285 (NKMD), and 310–312 (SAV). The Mg(2+) site is built by serine 172 and threonine 192. The OCT domain occupies 350–428 (KLETEGVKFD…ILEYEFEFID (79 aa)).

The protein belongs to the TRAFAC class OBG-HflX-like GTPase superfamily. OBG GTPase family. As to quaternary structure, monomer. It depends on Mg(2+) as a cofactor.

Its subcellular location is the cytoplasm. In terms of biological role, an essential GTPase which binds GTP, GDP and possibly (p)ppGpp with moderate affinity, with high nucleotide exchange rates and a fairly low GTP hydrolysis rate. Plays a role in control of the cell cycle, stress response, ribosome biogenesis and in those bacteria that undergo differentiation, in morphogenesis control. The sequence is that of GTPase Obg from Bacillus cereus (strain Q1).